The primary structure comprises 338 residues: Ferredoxin--NADP reductase (338 aa).

FAD contacts are provided by Thr-14, Asp-33, Gln-41, Tyr-46, Val-86, Phe-120, Asp-284, and Thr-325.

It belongs to the ferredoxin--NADP reductase type 2 family. As to quaternary structure, homodimer. Requires FAD as cofactor.

The catalysed reaction is 2 reduced [2Fe-2S]-[ferredoxin] + NADP(+) + H(+) = 2 oxidized [2Fe-2S]-[ferredoxin] + NADPH. This Pelagibacter ubique (strain HTCC1062) protein is Ferredoxin--NADP reductase.